A 195-amino-acid chain; its full sequence is Nucleoside-triphosphatase THEP1 (195 aa).

Residues 11-18 (GRPGSGKS) and 103-110 (VVVIDEIG) contribute to the ATP site.

This sequence belongs to the THEP1 NTPase family.

The catalysed reaction is a ribonucleoside 5'-triphosphate + H2O = a ribonucleoside 5'-diphosphate + phosphate + H(+). Functionally, has nucleotide phosphatase activity towards ATP, GTP, CTP, TTP and UTP. May hydrolyze nucleoside diphosphates with lower efficiency. The protein is Nucleoside-triphosphatase THEP1 of Korarchaeum cryptofilum (strain OPF8).